Reading from the N-terminus, the 212-residue chain is Ribonuclease HII (212 aa).

The RNase H type-2 domain maps to 12–201 (ELVAGVDEVG…VRAMLEQVSI (190 aa)). Asp-18, Glu-19, and Asp-110 together coordinate a divalent metal cation.

Belongs to the RNase HII family. The cofactor is Mn(2+). Mg(2+) serves as cofactor.

Its subcellular location is the cytoplasm. It carries out the reaction Endonucleolytic cleavage to 5'-phosphomonoester.. Functionally, endonuclease that specifically degrades the RNA of RNA-DNA hybrids. The protein is Ribonuclease HII of Stutzerimonas stutzeri (strain A1501) (Pseudomonas stutzeri).